A 370-amino-acid polypeptide reads, in one-letter code: Phospho-N-acetylmuramoyl-pentapeptide-transferase (370 aa).

The next 11 membrane-spanning stretches (helical) occupy residues P21–I41, L46–I66, P92–L112, F117–I137, L151–I171, I181–F201, D217–I237, N243–F263, V270–L290, L298–F318, and T349–L369.

It belongs to the glycosyltransferase 4 family. MraY subfamily. Mg(2+) is required as a cofactor.

Its subcellular location is the cell inner membrane. The catalysed reaction is UDP-N-acetyl-alpha-D-muramoyl-L-alanyl-gamma-D-glutamyl-meso-2,6-diaminopimeloyl-D-alanyl-D-alanine + di-trans,octa-cis-undecaprenyl phosphate = di-trans,octa-cis-undecaprenyl diphospho-N-acetyl-alpha-D-muramoyl-L-alanyl-D-glutamyl-meso-2,6-diaminopimeloyl-D-alanyl-D-alanine + UMP. The protein operates within cell wall biogenesis; peptidoglycan biosynthesis. Functionally, catalyzes the initial step of the lipid cycle reactions in the biosynthesis of the cell wall peptidoglycan: transfers peptidoglycan precursor phospho-MurNAc-pentapeptide from UDP-MurNAc-pentapeptide onto the lipid carrier undecaprenyl phosphate, yielding undecaprenyl-pyrophosphoryl-MurNAc-pentapeptide, known as lipid I. In Prochlorococcus marinus (strain SARG / CCMP1375 / SS120), this protein is Phospho-N-acetylmuramoyl-pentapeptide-transferase.